Reading from the N-terminus, the 254-residue chain is E3 ubiquitin-protein ligase NEURL3 (254 aa).

The NHR domain maps to 17 to 174; the sequence is ALSFHGDATG…TTKAIELLDP (158 aa). An RING-type zinc finger spans residues 197–236; the sequence is CVICFHNTANTRLMPCGHSQFCGSCAWHIFKDTARCPMCR.

It localises to the cytoplasm. It catalyses the reaction S-ubiquitinyl-[E2 ubiquitin-conjugating enzyme]-L-cysteine + [acceptor protein]-L-lysine = [E2 ubiquitin-conjugating enzyme]-L-cysteine + N(6)-ubiquitinyl-[acceptor protein]-L-lysine.. It participates in protein modification; protein ubiquitination. E3 ubiquitin-protein ligase that plays a role in various biological processes such as lung development or innate immunity. Seems to utilize UBE2E1. Promotes innate antiviral response by catalyzing 'Lys-63'-linked ubiquitination of IRF7. Also inhibits hepatitis C virus assembly by directly binding to viral E1 envelope glycoprotein to disrupt its interaction with E2. Plays an essential role in TLR4-mediated activation of MAPK pathways by promoting 'Lys-48'-linked polyubiquitination of the phosphatase DUSP1/MKP1. The chain is E3 ubiquitin-protein ligase NEURL3 (Neurl3) from Rattus norvegicus (Rat).